The sequence spans 434 residues: Protein maelstrom homolog (434 aa).

The segment at residues 4–73 is a DNA-binding region (HMG box); it reads RRASRNAYYF…AQGKDSGPSE (70 aa).

Belongs to the maelstrom family. As to quaternary structure, interacts with SMARCB1, SIN3B and DDX4. Interacts with piRNA-associated proteins TDRD1, PIWIL1 and PIWIL2. Interacts with Tex19.1 and, probably, Tex19.2. Testis-specific. Present in spermatocytes and round and early elongating spermatids.

It localises to the cytoplasm. It is found in the nucleus. Its function is as follows. Plays a central role during spermatogenesis by repressing transposable elements and preventing their mobilization, which is essential for the germline integrity. Acts via the piRNA metabolic process, which mediates the repression of transposable elements during meiosis by forming complexes composed of piRNAs and Piwi proteins and governs the methylation and subsequent repression of transposons. Its association with piP-bodies suggests a participation in the secondary piRNAs metabolic process. Required for the localization of germ-cell factors to the meiotic nuage. This chain is Protein maelstrom homolog, found in Mus musculus (Mouse).